We begin with the raw amino-acid sequence, 563 residues long: CDKN2A-interacting protein (563 aa).

Ala2 carries the N-acetylalanine modification. An XRN2-binding (XTBD) domain is found at 19-126; sequence VETLRCEGET…KVKKRGISSS (108 aa). Disordered stretches follow at residues 122 to 289 and 304 to 351; these read GISS…LLGS and SSSE…PSLL. Ser124 is modified (phosphoserine). Positions 147-160 are enriched in basic and acidic residues; the sequence is VERDHGKKSAKTDR. Composition is skewed to low complexity over residues 168 to 216 and 234 to 248; these read SSPS…SSQV and SASF…SMNS. Lys177 is covalently cross-linked (Glycyl lysine isopeptide (Lys-Gly) (interchain with G-Cter in SUMO1)). Residue Ser234 is modified to Phosphoserine. A compositionally biased stretch (polar residues) spans 249–262; sequence HMTQSTDNRQQSGS. Over residues 270-280 the composition is skewed to low complexity; the sequence is GSSGSASQSSS. At Thr340 the chain carries Phosphothreonine. Ser371 is subject to Phosphoserine. In terms of domain architecture, DRBM spans 445–520; it reads NHGELLNAAI…SREALKLFLK (76 aa).

This sequence belongs to the CARF family. Interacts with CDKN2A/p14ARF, p53/TP53 and MDM2. Interacts with CHEK2 and MAPK3. Interacts with XRN2. In terms of processing, may be ubiquitinated.

It is found in the nucleus. The protein resides in the nucleoplasm. Its function is as follows. Regulates DNA damage response and cell proliferation in a dose-dependent manner through a number of signaling pathways involved in cell proliferation, apoptosis and senescence. In Mus musculus (Mouse), this protein is CDKN2A-interacting protein (Cdkn2aip).